A 792-amino-acid polypeptide reads, in one-letter code: G-type lectin S-receptor-like serine/threonine-protein kinase At1g61440 (792 aa).

The signal sequence occupies residues 1–17 (MGKKRIVLLLFISFSYA). A Bulb-type lectin domain is found at 18 to 137 (EITKESPLSI…VTGRTLWESF (120 aa)). Topologically, residues 18–419 (EITKESPLSI…ELDVHKRKMT (402 aa)) are extracellular. N-linked (GlcNAc...) asparagine glycans are attached at residues N46, N127, and N229. One can recognise an EGF-like; atypical domain in the interval 271-307 (PANSCDIYGVCGPFGFCVISDPPKCKCFKGFVPKSIE). 2 disulfide bridges follow: C275–C287 and C281–C295. N-linked (GlcNAc...) asparagine glycans are attached at residues N313, N329, and N368. Positions 326 to 408 (CQGNSTGKDA…GEILSIRLAH (83 aa)) constitute a PAN domain. Intrachain disulfides connect C361/C382 and C365/C371. Residues 420–440 (IVASTVSLTLFVILGFATFGF) form a helical membrane-spanning segment. Topologically, residues 441 to 792 (WRNRVKHHDA…EMTESVILGR (352 aa)) are cytoplasmic. Residues 478 to 763 (FSLSNKLGHG…DLPLPKQPTF (286 aa)) enclose the Protein kinase domain. ATP contacts are provided by residues 484-492 (LGHGGFGSV) and K506. Phosphoserine is present on residues S512 and S527. The segment at 567–584 (RKRLELDWPKRFDIIQGI) is caM-binding. D603 functions as the Proton acceptor in the catalytic mechanism. A phosphoserine mark is found at S607 and S620. T637 is modified (phosphothreonine). Phosphoserine occurs at positions 680 and 774.

The protein belongs to the protein kinase superfamily. Ser/Thr protein kinase family.

It localises to the cell membrane. The catalysed reaction is L-seryl-[protein] + ATP = O-phospho-L-seryl-[protein] + ADP + H(+). It catalyses the reaction L-threonyl-[protein] + ATP = O-phospho-L-threonyl-[protein] + ADP + H(+). This Arabidopsis thaliana (Mouse-ear cress) protein is G-type lectin S-receptor-like serine/threonine-protein kinase At1g61440.